Reading from the N-terminus, the 554-residue chain is 3-(3-hydroxy-phenyl)propionate/3-hydroxycinnamic acid hydroxylase (554 aa).

Residues 17–46 (QVAI…VVEK) and 285–295 (FRIDRVLLAGD) each bind FAD.

This sequence belongs to the PheA/TfdB FAD monooxygenase family. It depends on FAD as a cofactor.

The catalysed reaction is 3-(3-hydroxyphenyl)propanoate + NADH + O2 + H(+) = 3-(2,3-dihydroxyphenyl)propanoate + NAD(+) + H2O. It catalyses the reaction (2E)-3-(3-hydroxyphenyl)prop-2-enoate + NADH + O2 + H(+) = (2E)-3-(2,3-dihydroxyphenyl)prop-2-enoate + NAD(+) + H2O. It participates in aromatic compound metabolism; 3-phenylpropanoate degradation. Its function is as follows. Catalyzes the insertion of one atom of molecular oxygen into position 2 of the phenyl ring of 3-(3-hydroxyphenyl)propionate (3-HPP) and hydroxycinnamic acid (3HCI). In Shigella sonnei (strain Ss046), this protein is 3-(3-hydroxy-phenyl)propionate/3-hydroxycinnamic acid hydroxylase.